Consider the following 206-residue polypeptide: Uridine kinase (206 aa).

9–16 serves as a coordination point for ATP; that stretch reads GGSGSGKT.

Belongs to the uridine kinase family.

Its subcellular location is the cytoplasm. The catalysed reaction is uridine + ATP = UMP + ADP + H(+). It catalyses the reaction cytidine + ATP = CMP + ADP + H(+). The protein operates within pyrimidine metabolism; CTP biosynthesis via salvage pathway; CTP from cytidine: step 1/3. It participates in pyrimidine metabolism; UMP biosynthesis via salvage pathway; UMP from uridine: step 1/1. This chain is Uridine kinase, found in Borrelia garinii subsp. bavariensis (strain ATCC BAA-2496 / DSM 23469 / PBi) (Borreliella bavariensis).